Here is a 116-residue protein sequence, read N- to C-terminus: Large ribosomal subunit protein uL24 (116 aa).

The protein belongs to the universal ribosomal protein uL24 family. As to quaternary structure, part of the 50S ribosomal subunit.

One of two assembly initiator proteins, it binds directly to the 5'-end of the 23S rRNA, where it nucleates assembly of the 50S subunit. In terms of biological role, one of the proteins that surrounds the polypeptide exit tunnel on the outside of the subunit. The chain is Large ribosomal subunit protein uL24 from Protochlamydia amoebophila (strain UWE25).